Reading from the N-terminus, the 151-residue chain is Urease accessory protein UreE (151 aa).

The protein belongs to the UreE family.

The protein resides in the cytoplasm. Functionally, involved in urease metallocenter assembly. Binds nickel. Probably functions as a nickel donor during metallocenter assembly. The chain is Urease accessory protein UreE from Lachnoclostridium phytofermentans (strain ATCC 700394 / DSM 18823 / ISDg) (Clostridium phytofermentans).